Consider the following 433-residue polypeptide: MNRDTSPDLHYLSGFGNEFASEALPGALPVGQNSPQKAPYGLYAELLSGTAFTMARSELRRTWLYRIRPSALHPRFERLARQPLGGPLGGINPNRLRWSPQPIPAEPTDFIEGWLPMAANAGAEKPAGVSIYIYRANRSMERVFFNADGELLLVPEQGRLRIATELGVMEVEPLEIAVIPRGMKFRVELLDGQARGYIAENHGAPLRLPDLGPIGSNGLANPRDFLTPVAHYEEAEGPVQLVQKFLGEHWACELQHSPLDVVAWHGSNVPYKYDLRRFNTIGTVSFDHPDPSIFTVLTSPTSVHGMANMDFVIFPPRWMVAENTFRPPWFHRNLMNEFMGLINGAYDAKAEGFLPGGASLHGVMSAHGPDAETCEKAIAADLAPHKIDNTMAFMFETSQVLRPSLQALECPQLQADYDSCWATLPSTFNPNRR.

Catalysis depends on His-288, which acts as the Proton acceptor. Fe cation is bound by residues His-331 and Glu-337. 2 residues coordinate homogentisate: Tyr-346 and His-367. His-367 lines the Fe cation pocket.

This sequence belongs to the homogentisate dioxygenase family. In terms of assembly, hexamer; dimer of trimers. Fe cation serves as cofactor.

The enzyme catalyses homogentisate + O2 = 4-maleylacetoacetate + H(+). It participates in amino-acid degradation; L-phenylalanine degradation; acetoacetate and fumarate from L-phenylalanine: step 4/6. Its function is as follows. Involved in the catabolism of homogentisate (2,5-dihydroxyphenylacetate or 2,5-OH-PhAc), a central intermediate in the degradation of phenylalanine and tyrosine. Catalyzes the oxidative ring cleavage of the ar omatic ring of 2,5-dihydroxyphenylacetate to yield maleylacetoacetate. This is Homogentisate 1,2-dioxygenase from Pseudomonas putida (strain ATCC 47054 / DSM 6125 / CFBP 8728 / NCIMB 11950 / KT2440).